Reading from the N-terminus, the 113-residue chain is Hydrogenase maturation factor HypA (113 aa).

Histidine 2 is a Ni(2+) binding site. 4 residues coordinate Zn(2+): cysteine 73, cysteine 76, cysteine 89, and cysteine 92.

The protein belongs to the HypA/HybF family.

In terms of biological role, involved in the maturation of [NiFe] hydrogenases. Required for nickel insertion into the metal center of the hydrogenase. The protein is Hydrogenase maturation factor HypA of Bradyrhizobium sp. (strain ORS 278).